Consider the following 427-residue polypeptide: Dihydroorotase (427 aa).

Zn(2+) contacts are provided by His60 and His62. Substrate is bound by residues 62 to 64 (HFR) and Asn94. The Zn(2+) site is built by Asp152, His179, and His232. Position 278 (Asn278) interacts with substrate. Asp305 is a binding site for Zn(2+). Asp305 is an active-site residue. Residues His309 and 323 to 324 (FG) contribute to the substrate site.

The protein belongs to the metallo-dependent hydrolases superfamily. DHOase family. Class I DHOase subfamily. Requires Zn(2+) as cofactor.

It carries out the reaction (S)-dihydroorotate + H2O = N-carbamoyl-L-aspartate + H(+). It functions in the pathway pyrimidine metabolism; UMP biosynthesis via de novo pathway; (S)-dihydroorotate from bicarbonate: step 3/3. Functionally, catalyzes the reversible cyclization of carbamoyl aspartate to dihydroorotate. The chain is Dihydroorotase from Enterococcus faecalis (strain ATCC 700802 / V583).